Here is a 363-residue protein sequence, read N- to C-terminus: 3-dehydroquinate synthase (363 aa).

Residues 107–111, 131–132, lysine 144, and lysine 153 contribute to the NAD(+) site; these read GVIGD and TT. Zn(2+) contacts are provided by glutamate 186, histidine 251, and histidine 268.

This sequence belongs to the sugar phosphate cyclases superfamily. Dehydroquinate synthase family. NAD(+) serves as cofactor. It depends on Co(2+) as a cofactor. Requires Zn(2+) as cofactor.

Its subcellular location is the cytoplasm. The enzyme catalyses 7-phospho-2-dehydro-3-deoxy-D-arabino-heptonate = 3-dehydroquinate + phosphate. The protein operates within metabolic intermediate biosynthesis; chorismate biosynthesis; chorismate from D-erythrose 4-phosphate and phosphoenolpyruvate: step 2/7. Functionally, catalyzes the conversion of 3-deoxy-D-arabino-heptulosonate 7-phosphate (DAHP) to dehydroquinate (DHQ). The sequence is that of 3-dehydroquinate synthase from Nostoc sp. (strain PCC 7120 / SAG 25.82 / UTEX 2576).